Reading from the N-terminus, the 671-residue chain is Receptor-interacting serine/threonine-protein kinase 1 (671 aa).

Ser-6 bears the Phosphoserine; by IKKA and IKKB mark. The Protein kinase domain maps to 17 to 289; sequence FLESAELDSG…GIEEKFRPFY (273 aa). Residue Ser-20 is modified to Phosphoserine; by autocatalysis. Residues 23–31 and Lys-45 each bind ATP; that span reads LDSGGFGKV. A Phosphoserine; by IKKA and IKKB modification is found at Ser-25. Asp-138 acts as the Proton acceptor in catalysis. Position 161 is a phosphoserine; by RIPK3 and autocatalysis (Ser-161). A Phosphoserine; by autocatalysis modification is found at Ser-166. The tract at residues 290-582 is interaction with SQSTM1; it reads LSQLEESVEE…QAIFDNTTSL (293 aa). The residue at position 303 (Ser-303) is a Phosphoserine. 3 positions are modified to phosphoserine; by MAP3K7: Ser-320, Ser-331, and Ser-333. Residues 331–348 show a composition bias toward polar residues; sequence SRSNSATEQPGSLHSSQG. The disordered stretch occupies residues 331-354; the sequence is SRSNSATEQPGSLHSSQGLGMGPV. A Glycyl lysine isopeptide (Lys-Gly) (interchain with G-Cter in ubiquitin) cross-link involves residue Lys-377. Position 384 is a phosphotyrosine (Tyr-384). Positions 389 to 455 are disordered; it reads SRMDRQTKQQ…GNAVHQPSGL (67 aa). Positions 428 to 444 are enriched in polar residues; that stretch reads NFQNTEGKGTAYSSAAS. Positions 531-547 match the RIP homotypic interaction motif (RHIM) motif; sequence YTIYNSTGIQIGAYNYM. The region spanning 583–669 is the Death domain; it reads TDKHLDPIRE…DLLSSLIYVS (87 aa). (Microbial infection) N-beta-linked (GlcNAc) arginine glycosylation is present at Arg-603.

It belongs to the protein kinase superfamily. TKL Ser/Thr protein kinase family. As to quaternary structure, homodimer. Interacts (via RIP homotypic interaction motif) with RIPK3 (via RIP homotypic interaction motif); this interaction induces RIPK1 phosphorylation and formation of a RIPK1-RIPK3 necroptosis-inducing complex. Upon TNF-induced necrosis, the RIPK1-RIPK3 dimer further interacts with PGAM5 and MLKL; the formation of this complex leads to PGAM5 phosphorylation and increase in PGAM5 phosphatase activity. Interacts (via the death domain) with TNFRSF6 (via the death domain) and TRADD (via the death domain). Is recruited by TRADD to TNFRSF1A in a TNF-dependent process. Binds RNF216, EGFR, IKBKG, TRAF1, TRAF2 and TRAF3. Interacts with BNLF1. Interacts with SQSTM1 upon TNF-alpha stimulation. May interact with MAVS/IPS1. Interacts with ZFAND5. Interacts with RBCK1. Interacts with ZBP1. Interacts with BIRC2/c-IAP1, BIRC3/c-IAP2 and XIAP/BIRC4. Interacts (via kinase domain) with DAB2IP (via Ras-GAP domain); the interaction occurs in a TNF-alpha-dependent manner. Interacts with ARHGEF2. Interacts (via protein kinase domain) with RFFL; involved in RIPK1 ubiquitination. Interacts with RNF34; involved in RIPK1 ubiquitination. Interacts with TICAM1 and this interaction is enhanced in the presence of WDFY1. Interacts with PELI1. Interacts (via death domain) with CRADD (via death domain); the interaction is direct. Component of complex IIa composed of at least RIPK1, FADD and CASP8. Component of the AIM2 PANoptosome complex, a multiprotein complex that drives inflammatory cell death (PANoptosis). Interacts with MAP3K7, CFLAR, CASP8, FADD and NEMO. Interacts with TAX1BP1; this interaction negatively regulates RIPK1 ubiquitination. Interacts with GRB2. Interacts with DDX24; this interaction disrupts RLR signaling activation of IFN-dependent transcription factor IRF7. (Microbial infection) Interacts with mumps virus protein SH; this interaction inhibits downstream NF-kappa-B pathway activation. In terms of assembly, (Microbial infection) Interacts with Murid herpesvirus 1 protein RIR1. As to quaternary structure, (Microbial infection) Interacts (via RIP homotypic interaction motif) with herpes simplex virus 1/HHV-1 protein RIR1/ICP6 (via RIP homotypic interaction motif); this interaction prevents necroptosis activation. (Microbial infection) Interacts (via RIP homotypic interaction motif) with herpes simplex virus 2/HHV-2 protein RIR1/ICP10 (via RIP homotypic interaction motif); this interaction prevents necroptosis activation. Post-translationally, (Microbial infection) Proteolytically cleaved by S.flexneri OspD3 within the RIP homotypic interaction motif (RHIM), leading to its degradation and inhibition of necroptosis. Proteolytically cleaved by CASP8 at Asp-324. Cleavage is crucial for limiting TNF-induced apoptosis, necroptosis and inflammatory response. Cleavage abolishes NF-kappa-B activation and enhances the interaction of TRADD with FADD. Proteolytically cleaved by CASP6 during intrinsic apoptosis. In terms of processing, RIPK1 and RIPK3 undergo reciprocal auto- and trans-phosphorylation. Phosphorylation of Ser-161 by RIPK3 is necessary for the formation of the necroptosis-inducing complex. Phosphorylation at Ser-25 represses its kinase activity and consequently prevents TNF-mediated RIPK1-dependent cell death. Phosphorylated at Ser-320 by MAP3K7 which requires prior ubiquitination with 'Lys-63'-linked chains by BIRC2/c-IAP1 and BIRC3/c-IAP2. This phosphorylation positively regulates RIPK1 interaction with RIPK3 to promote necroptosis but negatively regulates RIPK1 kinase activity and its interaction with FADD to mediate apoptosis. Post-translationally, deubiquitinated by USP7; this modification is required for TNF-alpha-induced apoptosis. Ubiquitinated with 'Lys-11'-, 'Lys-48'-, 'Lys-63'- and linear-linked type ubiquitin. Polyubiquitination with 'Lys-63'-linked chains by TRAF2 induces association with the IKK complex. Deubiquitination of 'Lys-63'-linked chains and polyubiquitination with 'Lys-48'-linked chains by TNFAIP3 leads to RIPK1 proteasomal degradation and consequently down-regulates TNF-alpha-induced NF-kappa-B signaling. 'Lys-48'-linked polyubiquitination by RFFL or RNF34 also promotes proteasomal degradation and negatively regulates TNF-alpha-induced NF-kappa-B signaling. Linear polyubiquitinated; the head-to-tail linear polyubiquitination ('Met-1'-linked) is mediated by the LUBAC complex and decreases protein kinase activity. Deubiquitination of linear polyubiquitin by CYLD promotes the kinase activity. Polyubiquitinated with 'Lys-48' and 'Lys-63'-linked chains by BIRC2/c-IAP1 and BIRC3/c-IAP2, leading to activation of NF-kappa-B. Ubiquitinated with 'Lys-63'-linked chains by PELI1. Ubiquitination at Lys-377 with 'Lys-63'-linked chains by BIRC2/c-IAP1 and BIRC3/c-IAP2 is essential for its phosphorylation at Ser-320 mediated by MAP3K7. This ubiquitination is required for NF-kB activation, suppresses RIPK1 kinase activity and plays a critical role in preventing cell death during embryonic development. In terms of processing, (Microbial infection) Glycosylated at Arg-603 by enteropathogenic E.coli protein NleB1: arginine GlcNAcylation prevents homotypic/heterotypic death domain interactions.

The protein localises to the cytoplasm. Its subcellular location is the cell membrane. It carries out the reaction L-seryl-[protein] + ATP = O-phospho-L-seryl-[protein] + ADP + H(+). The catalysed reaction is L-threonyl-[protein] + ATP = O-phospho-L-threonyl-[protein] + ADP + H(+). With respect to regulation, serine-threonine kinase activity is inhibited by linear polyubiquitination ('Met-1'-linked) by the LUBAC complex. Inhibited by necrostatins, including necrostatin-1, necrostatin-3 and necrostatin-4. Serine-threonine kinase which is a key regulator of TNF-mediated apoptosis, necroptosis and inflammatory pathways. Exhibits kinase activity-dependent functions that regulate cell death and kinase-independent scaffold functions regulating inflammatory signaling and cell survival. Has kinase-independent scaffold functions: upon binding of TNF to TNFR1, RIPK1 is recruited to the TNF-R1 signaling complex (TNF-RSC also known as complex I) where it acts as a scaffold protein promoting cell survival, in part, by activating the canonical NF-kappa-B pathway. Kinase activity is essential to regulate necroptosis and apoptosis, two parallel forms of cell death: upon activation of its protein kinase activity, regulates assembly of two death-inducing complexes, namely complex IIa (RIPK1-FADD-CASP8), which drives apoptosis, and the complex IIb (RIPK1-RIPK3-MLKL), which drives necroptosis. RIPK1 is required to limit CASP8-dependent TNFR1-induced apoptosis. In normal conditions, RIPK1 acts as an inhibitor of RIPK3-dependent necroptosis, a process mediated by RIPK3 component of complex IIb, which catalyzes phosphorylation of MLKL upon induction by ZBP1. Inhibits RIPK3-mediated necroptosis via FADD-mediated recruitment of CASP8, which cleaves RIPK1 and limits TNF-induced necroptosis. Required to inhibit apoptosis and necroptosis during embryonic development: acts by preventing the interaction of TRADD with FADD thereby limiting aberrant activation of CASP8. In addition to apoptosis and necroptosis, also involved in inflammatory response by promoting transcriptional production of pro-inflammatory cytokines, such as interleukin-6 (IL6). Phosphorylates RIPK3: RIPK1 and RIPK3 undergo reciprocal auto- and trans-phosphorylation. Phosphorylates DAB2IP at 'Ser-728' in a TNF-alpha-dependent manner, and thereby activates the MAP3K5-JNK apoptotic cascade. Required for ZBP1-induced NF-kappa-B activation in response to DNA damage. This Homo sapiens (Human) protein is Receptor-interacting serine/threonine-protein kinase 1.